A 164-amino-acid polypeptide reads, in one-letter code: MTIAFYAGSFDPITNGHLDVLRGSLLLADKVVVAIGVQAQKQSLFSFEERVDLITQVGRDLLNVGPDRLQVISFNNLLIDTAREIGASFLVRGLRDGTDFDYEMQMAGMNGIMAPELQTVFLPASISGRVITSTLVHQIAAMGGDVTHFVPQNVAQALRLKFKF.

S9 is a binding site for substrate. ATP contacts are provided by residues 9-10 (SF) and H17. Residues K41, L78, and R92 each contribute to the substrate site. ATP-binding positions include 93 to 95 (GLR), E103, and 128 to 134 (GRVITST).

The protein belongs to the bacterial CoaD family. Homohexamer. The cofactor is Mg(2+).

It localises to the cytoplasm. The catalysed reaction is (R)-4'-phosphopantetheine + ATP + H(+) = 3'-dephospho-CoA + diphosphate. It functions in the pathway cofactor biosynthesis; coenzyme A biosynthesis; CoA from (R)-pantothenate: step 4/5. Its function is as follows. Reversibly transfers an adenylyl group from ATP to 4'-phosphopantetheine, yielding dephospho-CoA (dPCoA) and pyrophosphate. This chain is Phosphopantetheine adenylyltransferase, found in Bartonella bacilliformis (strain ATCC 35685 / KC583 / Herrer 020/F12,63).